The chain runs to 116 residues: Large ribosomal subunit protein uL18 (116 aa).

It belongs to the universal ribosomal protein uL18 family. In terms of assembly, part of the 50S ribosomal subunit; part of the 5S rRNA/L5/L18/L25 subcomplex. Contacts the 5S and 23S rRNAs.

Functionally, this is one of the proteins that bind and probably mediate the attachment of the 5S RNA into the large ribosomal subunit, where it forms part of the central protuberance. This chain is Large ribosomal subunit protein uL18, found in Pseudomonas fluorescens (strain SBW25).